Reading from the N-terminus, the 300-residue chain is B1 kinase (300 aa).

The 267-residue stretch at 16–282 (WVVGPLIGKG…ITMVNSLTYF (267 aa)) folds into the Protein kinase domain. Residues 22-30 (IGKGGFGSI) and Lys45 contribute to the ATP site. The active-site Proton acceptor is Asp147.

The protein belongs to the protein kinase superfamily. Ser/Thr protein kinase family. Poxviruses subfamily. Interacts with host JIP1; this interaction increases the amount of MAPK bound to JIP1 and subsequently increases the activity of transcription factors, such as JUN, that respond to these complexes. Interacts with protein OPG198; this interaction inhibits the repressive activity of OPG198 pseudokinase on viral replication factory formation. It depends on Mg(2+) as a cofactor. Autophosphorylated.

It localises to the virion. Its subcellular location is the host cytoplasm. The enzyme catalyses L-seryl-[protein] + ATP = O-phospho-L-seryl-[protein] + ADP + H(+). It catalyses the reaction L-threonyl-[protein] + ATP = O-phospho-L-threonyl-[protein] + ADP + H(+). Its function is as follows. Essential serine/threonine-protein kinase that plays different role in the viral life cycle. Phosphorylates the host small ribosomal protein RACK1 thereby customizing the ribosomes to a state optimal for viral mRNAs (which contain poly-A leaders) but not for host mRNAs. Facilitates viral DNA replication by inhibiting host BANF1, a cellular host defense responsive to foreign DNA. Phosphorylates host BANF1 on serine and threonine residues; this leads to BANF1 relocalization to the cytoplasm, loss of dimerization and impaired DNA binding activity. Indeed, BANF1 activity depends on its DNA-binding property which is blocked by VPK1-mediated phosphorylation. Required for viral intermediate genes expression, probably by inhibiting host BANF1. Modulates cellular responses via host JUN by two different mechanisms, either by direct phosphorylation or by modulation of upstream JIP1-MAPK complexes. Seems to participate in the accumulation/processing of late proteins and thus in virion maturation. In addition, inhibits B12 repressive activity on viral DNA replication via a phosphorylation-dependent mechanism. The chain is B1 kinase (OPG187) from Vaccinia virus (strain Ankara) (VACV).